A 445-amino-acid polypeptide reads, in one-letter code: MSYFGTDGIRGKFGQMPITPEFALKLGFAAGKVLKRTSPKNKPLVVLGKDTRLSGYILESALQAGLNAAGVYVHLLGPLPTPAIAHLTRALHAHAGIVISASHNPYFDNGIKFFSSEGKKLPDSLQEEINKELEKDLFIEDTANLGKSVRVTDANGRYIEFCKSTFPYHFDLNNLKIVVDCAHGAAYSVGPSVFRELGAKVVALYNEPDGLNINENCGSTHPESLQKAVVEHGADLGIAFDGDADRVVMVDKFGNLIDGDHILYILATQAKNKPAGVVGTVMSNMALEVALEKANVGFVRAKVGDRYVLQALEENGWVTGGEPSGHILTLDKSTTGDAIIAALQVLTVMVEQNKALHELVHDFKLYPQVLVNVRLEQMLDPYSIPALVAEFNKAEEQLKGRGRILIRKSGTEPVIRVMVEGDNEQEVKTLAEHLANAVRSQAQVA.

Serine 102 (phosphoserine intermediate) is an active-site residue. Mg(2+) is bound by residues serine 102, aspartate 241, aspartate 243, and aspartate 245. Residue serine 102 is modified to Phosphoserine.

This sequence belongs to the phosphohexose mutase family. It depends on Mg(2+) as a cofactor. Activated by phosphorylation.

It catalyses the reaction alpha-D-glucosamine 1-phosphate = D-glucosamine 6-phosphate. Catalyzes the conversion of glucosamine-6-phosphate to glucosamine-1-phosphate. This Acinetobacter baumannii (strain SDF) protein is Phosphoglucosamine mutase.